We begin with the raw amino-acid sequence, 267 residues long: MNKTRYRLDVAYDGANFCGWAPQPGLRTVGGLILDALRLICSEPPDIVIAARTDAGVHALQQVCHVDLISSPDPVWLLHRLRSLLKSETDLHILSAVKAPVNFHARFSAIGRRYVYRVIDKRSSWYPQNRYFVYRVNAFLQDYRMRRAASGLIGLKDFGAFCKPRRMGSTVRHLRQFEVIRQPDGQIHFFLESDAFCHSMVRNLVGSLIEVGRGALTLQDLFCYTKIAKRTPKIPTLPPHALTLIGIDYPQEHLFECQNRKTRQKRT.

Aspartate 54 serves as the catalytic Nucleophile. Tyrosine 114 is a substrate binding site.

The protein belongs to the tRNA pseudouridine synthase TruA family. In terms of assembly, homodimer.

It catalyses the reaction uridine(38/39/40) in tRNA = pseudouridine(38/39/40) in tRNA. Formation of pseudouridine at positions 38, 39 and 40 in the anticodon stem and loop of transfer RNAs. The sequence is that of tRNA pseudouridine synthase A from Tropheryma whipplei (strain TW08/27) (Whipple's bacillus).